The chain runs to 260 residues: Small ribosomal subunit protein uS2 (260 aa).

Residues 240–260 are disordered; sequence VLKPKLPYQPNRRPYQETVKK.

Belongs to the universal ribosomal protein uS2 family.

The sequence is that of Small ribosomal subunit protein uS2 from Phytoplasma australiense.